A 669-amino-acid polypeptide reads, in one-letter code: DNA ligase (669 aa).

NAD(+) contacts are provided by residues Asp-32–Asp-36, Ser-81–Leu-82, and Glu-113. Residue Lys-115 is the N6-AMP-lysine intermediate of the active site. Residues Arg-136, Glu-173, Lys-290, and Lys-314 each coordinate NAD(+). 4 residues coordinate Zn(2+): Cys-408, Cys-411, Cys-426, and Cys-432. In terms of domain architecture, BRCT spans Ala-592 to Lys-669.

Belongs to the NAD-dependent DNA ligase family. LigA subfamily. Mg(2+) is required as a cofactor. It depends on Mn(2+) as a cofactor.

The catalysed reaction is NAD(+) + (deoxyribonucleotide)n-3'-hydroxyl + 5'-phospho-(deoxyribonucleotide)m = (deoxyribonucleotide)n+m + AMP + beta-nicotinamide D-nucleotide.. DNA ligase that catalyzes the formation of phosphodiester linkages between 5'-phosphoryl and 3'-hydroxyl groups in double-stranded DNA using NAD as a coenzyme and as the energy source for the reaction. It is essential for DNA replication and repair of damaged DNA. The chain is DNA ligase from Vibrio cholerae serotype O1 (strain ATCC 39541 / Classical Ogawa 395 / O395).